We begin with the raw amino-acid sequence, 293 residues long: Formamidopyrimidine-DNA glycosylase (293 aa).

Residue proline 2 is the Schiff-base intermediate with DNA of the active site. The active-site Proton donor is glutamate 3. Residue lysine 58 is the Proton donor; for beta-elimination activity of the active site. Positions 104, 123, and 166 each coordinate DNA. Residues 257–293 form an FPG-type zinc finger; the sequence is QVYDREGDKCRTPACKGAVKRFTQNGRSTFWCPVCQT. Arginine 283 (proton donor; for delta-elimination activity) is an active-site residue.

It belongs to the FPG family. Monomer. The cofactor is Zn(2+).

It catalyses the reaction Hydrolysis of DNA containing ring-opened 7-methylguanine residues, releasing 2,6-diamino-4-hydroxy-5-(N-methyl)formamidopyrimidine.. The catalysed reaction is 2'-deoxyribonucleotide-(2'-deoxyribose 5'-phosphate)-2'-deoxyribonucleotide-DNA = a 3'-end 2'-deoxyribonucleotide-(2,3-dehydro-2,3-deoxyribose 5'-phosphate)-DNA + a 5'-end 5'-phospho-2'-deoxyribonucleoside-DNA + H(+). Its function is as follows. Involved in base excision repair of DNA damaged by oxidation or by mutagenic agents. Acts as a DNA glycosylase that recognizes and removes damaged bases. Has a preference for oxidized purines, such as 7,8-dihydro-8-oxoguanine (8-oxoG). Has AP (apurinic/apyrimidinic) lyase activity and introduces nicks in the DNA strand. Cleaves the DNA backbone by beta-delta elimination to generate a single-strand break at the site of the removed base with both 3'- and 5'-phosphates. The sequence is that of Formamidopyrimidine-DNA glycosylase from Nitrobacter winogradskyi (strain ATCC 25391 / DSM 10237 / CIP 104748 / NCIMB 11846 / Nb-255).